The primary structure comprises 123 residues: uncharacterized protein (123 aa).

2 helical membrane passes run 53 to 73 (VWFLFLFFIASHINILFFFFL) and 75 to 95 (VLWFLWCYLCSGLFLFDVFSH).

The protein resides in the membrane. This is an uncharacterized protein from Saccharomyces cerevisiae (strain ATCC 204508 / S288c) (Baker's yeast).